A 733-amino-acid chain; its full sequence is Polyribonucleotide nucleotidyltransferase (733 aa).

2 residues coordinate Mg(2+): Asp-488 and Asp-494. One can recognise a KH domain in the interval 555–614; it reads PRIEMMTIPVEKIREVIGSGGKVIREIVEQTGAKINIEDDGTIKIASPDTKSIETAKSWI. The 69-residue stretch at 624–692 folds into the S1 motif domain; the sequence is GTIYQGTVVK…ERGKIRLSMK (69 aa). The disordered stretch occupies residues 698-733; it reads TGKEIPQDDLIKTEKEQNPDEKNKSEKKRHNRKKED. The span at 702-721 shows a compositional bias: basic and acidic residues; that stretch reads IPQDDLIKTEKEQNPDEKNK. Positions 722 to 733 are enriched in basic residues; sequence SEKKRHNRKKED.

The protein belongs to the polyribonucleotide nucleotidyltransferase family. It depends on Mg(2+) as a cofactor.

It is found in the cytoplasm. It catalyses the reaction RNA(n+1) + phosphate = RNA(n) + a ribonucleoside 5'-diphosphate. Its function is as follows. Involved in mRNA degradation. Catalyzes the phosphorolysis of single-stranded polyribonucleotides processively in the 3'- to 5'-direction. This is Polyribonucleotide nucleotidyltransferase from Bartonella bacilliformis (strain ATCC 35685 / KC583 / Herrer 020/F12,63).